The primary structure comprises 68 residues: Phosphatidylinositol N-acetylglucosaminyltransferase ERI1 subunit (68 aa).

Transmembrane regions (helical) follow at residues 8-28 (FLVL…FYWL) and 34-54 (FLHY…WALI).

As to quaternary structure, component of the phosphatidylinositol N-acetylglucosaminyltransferase (GPI-GlcNAc transferase) complex composed of at least GPI1, GPI2, GPI3, GPI15, GPI19 and ERI1. Interacts with GPI2. Interacts with GTP-bound RAS2 in an effector loop-dependent manner.

The protein localises to the endoplasmic reticulum membrane. The protein operates within glycolipid biosynthesis; glycosylphosphatidylinositol-anchor biosynthesis. In terms of biological role, probable component of the GPI-GlcNAc transferase (GPI-GnT) complex in the endoplasmic reticulum, a complex that catalyzes transfer of GlcNAc from UDP-GlcNAc to an acceptor phosphatidylinositol, the first step in the production of GPI-anchors for cell surface proteins. Ras may inhibit the enzyme activity of the GPI-GnT complex via the association between ERI1 and RAS2. The polypeptide is Phosphatidylinositol N-acetylglucosaminyltransferase ERI1 subunit (ERI1) (Saccharomyces cerevisiae (strain ATCC 204508 / S288c) (Baker's yeast)).